A 310-amino-acid polypeptide reads, in one-letter code: ATP phosphoribosyltransferase (310 aa).

This sequence belongs to the ATP phosphoribosyltransferase family.

Its subcellular location is the cytoplasm. The catalysed reaction is 1-(5-phospho-beta-D-ribosyl)-ATP + diphosphate = 5-phospho-alpha-D-ribose 1-diphosphate + ATP. Its pathway is amino-acid biosynthesis; L-histidine biosynthesis; L-histidine from 5-phospho-alpha-D-ribose 1-diphosphate: step 1/9. Catalyzes the condensation of ATP and 5-phosphoribose 1-diphosphate to form N'-(5'-phosphoribosyl)-ATP (PR-ATP). Has a crucial role in the pathway because the rate of histidine biosynthesis seems to be controlled primarily by regulation of HisG enzymatic activity. The chain is ATP phosphoribosyltransferase (his1) from Schizosaccharomyces pombe (strain 972 / ATCC 24843) (Fission yeast).